We begin with the raw amino-acid sequence, 817 residues long: MAYRFIKWFEELSKNDVPLVGGKGANLGEMTNAGIPVPPGFCVTAEAYKYFVENVKVSKEDVKRILGEKVNKGTISEVLAQAPDEPRPLQDWIMDIISKTDVDDSKMLQENTEAIRTLIKSLDMPSEIAEEIKQAYKELSQRFGQEEVYVAVRSSATAEDLPEASFAGQQETYLDVLGADDVIDKVKRCWASLWTARATFYRAKQGFDHSKVYLSAVVQKMVNSEKSGVMFTANPVTNNRNEIMINASWGLGEAVVSGAVTPDEYIVEKGTWKIKEKVIAKKEVMVIRNPETGRGTVMVKVAEYLGPEWVEKQVLTDEQIIEVAKMGQKIEDHYGWPQDIEWAYDKDDGKLYIVQSRPITTLKEEATAEEAEEVEEAEVILKGLGASPGIGAGRVVVIFDASEIDKVKEGDILVTTMTNPDMVPAMKRAAAIVTDEGGRTSHAAIVSRELGIPCVVGTKEATKKLKTGMYVTVDGTRGLVYKGIVKSLVKKKEEAKAEGGQVVVAGAPLVTGTMVKVNVSMPEVAERAAATGADGVGLLRAEHMILSIGQHPIKFIKEGKEEELVEKLAEGIEKVAAAFYPRPVWYRTLDAPTNEFREMPGGEDEPEERNPMLGWRGIRRGLDQPELLRAEFKAIKKVVEKGYNNIGVMLPLVSHPEQIREAKRIAREVGLEPHKDVAWGVMIEVPAAAIIIEDLIKEGIDFVSFGTNDLTQYTLAIDRDNERVAKLYDETHPAVLKLIKHVIKVCKRYGVETSICGQAGSDPKMARILVRLGIDSISANPDAVQLIRQVVAQEERKLMLEAARKQLFEEEEEEELF.

His442 functions as the Tele-phosphohistidine intermediate in the catalytic mechanism. Substrate-binding residues include Arg540, Arg587, Glu684, Gly706, Thr707, Asn708, and Asp709. Glu684 provides a ligand contact to Mg(2+). Asp709 contacts Mg(2+). The active-site Proton donor is Cys756.

The protein belongs to the PEP-utilizing enzyme family. In terms of assembly, homooctamer. The cofactor is Mg(2+).

It carries out the reaction pyruvate + ATP + H2O = phosphoenolpyruvate + AMP + phosphate + 2 H(+). The protein operates within carbohydrate biosynthesis; gluconeogenesis. Catalyzes the phosphorylation of pyruvate to phosphoenolpyruvate. The protein is Phosphoenolpyruvate synthase (ppsA) of Pyrococcus furiosus (strain ATCC 43587 / DSM 3638 / JCM 8422 / Vc1).